The primary structure comprises 61 residues: Large ribosomal subunit protein bL32 (61 aa).

The segment at 1–22 (MAVPKQKSSKSRGRKRRTHQKV) is disordered. The segment covering 7 to 20 (KSSKSRGRKRRTHQ) has biased composition (basic residues).

It belongs to the bacterial ribosomal protein bL32 family.

The protein is Large ribosomal subunit protein bL32 of Desulforapulum autotrophicum (strain ATCC 43914 / DSM 3382 / VKM B-1955 / HRM2) (Desulfobacterium autotrophicum).